The primary structure comprises 229 residues: 7-cyano-7-deazaguanine synthase (229 aa).

L15 to V25 contributes to the ATP binding site. Residues C194, C204, C207, and C210 each contribute to the Zn(2+) site.

The protein belongs to the QueC family. Zn(2+) serves as cofactor.

It carries out the reaction 7-carboxy-7-deazaguanine + NH4(+) + ATP = 7-cyano-7-deazaguanine + ADP + phosphate + H2O + H(+). It participates in purine metabolism; 7-cyano-7-deazaguanine biosynthesis. In terms of biological role, catalyzes the ATP-dependent conversion of 7-carboxy-7-deazaguanine (CDG) to 7-cyano-7-deazaguanine (preQ(0)). In Pseudomonas savastanoi pv. phaseolicola (strain 1448A / Race 6) (Pseudomonas syringae pv. phaseolicola (strain 1448A / Race 6)), this protein is 7-cyano-7-deazaguanine synthase.